The primary structure comprises 448 residues: N-succinylarginine dihydrolase (448 aa).

Residues 19–28 (AGLSYGNVAS), N110, and 137–138 (HR) contribute to the substrate site. Residue E174 is part of the active site. Position 214 (R214) interacts with substrate. H250 is a catalytic residue. Substrate-binding residues include D252 and N364. C370 functions as the Nucleophile in the catalytic mechanism.

This sequence belongs to the succinylarginine dihydrolase family. Homodimer.

The enzyme catalyses N(2)-succinyl-L-arginine + 2 H2O + 2 H(+) = N(2)-succinyl-L-ornithine + 2 NH4(+) + CO2. The protein operates within amino-acid degradation; L-arginine degradation via AST pathway; L-glutamate and succinate from L-arginine: step 2/5. Functionally, catalyzes the hydrolysis of N(2)-succinylarginine into N(2)-succinylornithine, ammonia and CO(2). The protein is N-succinylarginine dihydrolase of Pseudoalteromonas translucida (strain TAC 125).